Here is a 126-residue protein sequence, read N- to C-terminus: MNITLLKSKIHRASVTEARLDYIGSISIDEKLLQASGILEYEKVQVVNVNNGARFETYTIATQEEGVVCLNGAAARLAEVGDKVIIMSYADFNEEEAKTFKPKVVFVDENNTATKITNYEKHGAIF.

Ser25 (schiff-base intermediate with substrate; via pyruvic acid) is an active-site residue. Ser25 is subject to Pyruvic acid (Ser). Position 57 (Thr57) interacts with substrate. Tyr58 (proton donor) is an active-site residue. 72-74 lines the substrate pocket; it reads GAA.

This sequence belongs to the PanD family. Heterooctamer of four alpha and four beta subunits. Requires pyruvate as cofactor. Is synthesized initially as an inactive proenzyme, which is activated by self-cleavage at a specific serine bond to produce a beta-subunit with a hydroxyl group at its C-terminus and an alpha-subunit with a pyruvoyl group at its N-terminus.

It is found in the cytoplasm. It carries out the reaction L-aspartate + H(+) = beta-alanine + CO2. The protein operates within cofactor biosynthesis; (R)-pantothenate biosynthesis; beta-alanine from L-aspartate: step 1/1. Its function is as follows. Catalyzes the pyruvoyl-dependent decarboxylation of aspartate to produce beta-alanine. The sequence is that of Aspartate 1-decarboxylase from Campylobacter jejuni subsp. jejuni serotype O:6 (strain 81116 / NCTC 11828).